A 244-amino-acid polypeptide reads, in one-letter code: Type III pantothenate kinase (244 aa).

8 to 15 (DQGNSACK) is a binding site for ATP. Residues Tyr-88 and 94 to 97 (GADR) contribute to the substrate site. Asp-96 functions as the Proton acceptor in the catalytic mechanism. Asp-117 is a K(+) binding site. Thr-120 is a binding site for ATP. Residue Thr-175 coordinates substrate.

It belongs to the type III pantothenate kinase family. In terms of assembly, homodimer. It depends on NH4(+) as a cofactor. K(+) is required as a cofactor.

The protein localises to the cytoplasm. It catalyses the reaction (R)-pantothenate + ATP = (R)-4'-phosphopantothenate + ADP + H(+). It participates in cofactor biosynthesis; coenzyme A biosynthesis; CoA from (R)-pantothenate: step 1/5. In terms of biological role, catalyzes the phosphorylation of pantothenate (Pan), the first step in CoA biosynthesis. This is Type III pantothenate kinase from Porphyromonas gingivalis (strain ATCC BAA-308 / W83).